We begin with the raw amino-acid sequence, 185 residues long: UPF0149 protein PD_0802 (185 aa).

It belongs to the UPF0149 family.

The protein is UPF0149 protein PD_0802 of Xylella fastidiosa (strain Temecula1 / ATCC 700964).